Consider the following 557-residue polypeptide: CTP synthase (557 aa).

The interval 1–267 (MAKFVFVTGG…CREVLDVLDL (267 aa)) is amidoligase domain. CTP is bound at residue S13. Position 13 (S13) interacts with UTP. ATP is bound by residues 14 to 19 (SIGKGI) and D71. D71 and E141 together coordinate Mg(2+). CTP is bound by residues 148–150 (DIE), 188–193 (KTKPTQ), and K224. UTP is bound by residues 188–193 (KTKPTQ) and K224. In terms of domain architecture, Glutamine amidotransferase type-1 spans 292 to 534 (KVALVGKYVQ…IEAAQQRLPC (243 aa)). G354 contributes to the L-glutamine binding site. C381 serves as the catalytic Nucleophile; for glutamine hydrolysis. L-glutamine is bound by residues 382-385 (LGMQ), E405, and R462. Catalysis depends on residues H507 and E509. The disordered stretch occupies residues 532 to 557 (LPCSPSEAMRQQNNSAAGSSHPSLQP). The segment covering 540 to 557 (MRQQNNSAAGSSHPSLQP) has biased composition (polar residues).

Belongs to the CTP synthase family. In terms of assembly, homotetramer.

The catalysed reaction is UTP + L-glutamine + ATP + H2O = CTP + L-glutamate + ADP + phosphate + 2 H(+). It catalyses the reaction L-glutamine + H2O = L-glutamate + NH4(+). It carries out the reaction UTP + NH4(+) + ATP = CTP + ADP + phosphate + 2 H(+). The protein operates within pyrimidine metabolism; CTP biosynthesis via de novo pathway; CTP from UDP: step 2/2. With respect to regulation, allosterically activated by GTP, when glutamine is the substrate; GTP has no effect on the reaction when ammonia is the substrate. The allosteric effector GTP functions by stabilizing the protein conformation that binds the tetrahedral intermediate(s) formed during glutamine hydrolysis. Inhibited by the product CTP, via allosteric rather than competitive inhibition. Catalyzes the ATP-dependent amination of UTP to CTP with either L-glutamine or ammonia as the source of nitrogen. Regulates intracellular CTP levels through interactions with the four ribonucleotide triphosphates. This is CTP synthase from Synechococcus sp. (strain CC9311).